A 310-amino-acid chain; its full sequence is Cytochrome f (310 aa).

The first 27 residues, 1-27 (MRRHLSLFLGSLVIGLALLIAPAASWA), serve as a signal peptide directing secretion. Heme contacts are provided by Tyr-28, Cys-48, Cys-51, and His-52. Residues 277 to 297 (IYGLLAFFAAVALAQIMLVLK) form a helical membrane-spanning segment.

This sequence belongs to the cytochrome f family. As to quaternary structure, the 4 large subunits of the cytochrome b6-f complex are cytochrome b6, subunit IV (17 kDa polypeptide, PetD), cytochrome f and the Rieske protein, while the 4 small subunits are PetG, PetL, PetM and PetN. The complex functions as a dimer. Requires heme as cofactor.

The protein resides in the cellular thylakoid membrane. In terms of biological role, component of the cytochrome b6-f complex, which mediates electron transfer between photosystem II (PSII) and photosystem I (PSI), cyclic electron flow around PSI, and state transitions. The protein is Cytochrome f of Synechococcus sp. (strain CC9605).